Reading from the N-terminus, the 135-residue chain is Transcription antitermination protein NusB (135 aa).

The protein belongs to the NusB family.

In terms of biological role, involved in transcription antitermination. Required for transcription of ribosomal RNA (rRNA) genes. Binds specifically to the boxA antiterminator sequence of the ribosomal RNA (rrn) operons. This Shewanella piezotolerans (strain WP3 / JCM 13877) protein is Transcription antitermination protein NusB.